Consider the following 236-residue polypeptide: MITLPARPESLSFAPQQSALIVVDMQNAYASQGGYLDLAGFDVSATRPVIDNINTAVAAARAAGMLIIWFQNGWDDQYVEAGGPGSPNYHKSNALKTMRQRPELQGKLLAKGGWDYQLVDELTPQEGDIVLPKPRYSGFFNTPLDSILRSRGIRHLVFTGIATNVCVESTLRDGFFLEYFGIVLEDATHQAGPAFAQQAALFNIETFFGWVSDVESFCHALSPAAPLALAKEKRYA.

Asp-24 acts as the Proton acceptor in catalysis. Residue Lys-133 is part of the active site. Residue Cys-166 is the Nucleophile of the active site.

Belongs to the isochorismatase family. RutB subfamily.

The catalysed reaction is (Z)-3-ureidoacrylate + H2O + H(+) = (Z)-3-aminoacrylate + NH4(+) + CO2. The enzyme catalyses (Z)-3-ureidoacrylate + H2O = (Z)-3-aminoacrylate + carbamate + H(+). It catalyses the reaction (Z)-2-methylureidoacrylate + H2O + H(+) = (Z)-2-methylaminoacrylate + NH4(+) + CO2. Functionally, hydrolyzes ureidoacrylate to form aminoacrylate and carbamate. The carbamate hydrolyzes spontaneously, thereby releasing one of the nitrogen atoms of the pyrimidine ring as ammonia and one of its carbon atoms as CO2. The protein is Ureidoacrylate amidohydrolase RutB of Klebsiella pneumoniae subsp. pneumoniae (strain ATCC 700721 / MGH 78578).